The primary structure comprises 408 residues: Peptidase T (408 aa).

A Zn(2+)-binding site is contributed by His78. Residue Asp80 is part of the active site. Asp140 lines the Zn(2+) pocket. The Proton acceptor role is filled by Glu173. Glu174, Asp196, and His379 together coordinate Zn(2+).

It belongs to the peptidase M20B family. It depends on Zn(2+) as a cofactor.

The protein resides in the cytoplasm. The enzyme catalyses Release of the N-terminal residue from a tripeptide.. Its function is as follows. Cleaves the N-terminal amino acid of tripeptides. This is Peptidase T from Escherichia coli (strain K12 / MC4100 / BW2952).